A 416-amino-acid chain; its full sequence is UDP-N-acetylglucosamine 1-carboxyvinyltransferase (416 aa).

Phosphoenolpyruvate is bound at residue 22-23 (KN). R92 contacts UDP-N-acetyl-alpha-D-glucosamine. C116 (proton donor) is an active-site residue. C116 carries the post-translational modification 2-(S-cysteinyl)pyruvic acid O-phosphothioketal. UDP-N-acetyl-alpha-D-glucosamine-binding positions include 121-125 (RPIDQ), D304, and I326.

It belongs to the EPSP synthase family. MurA subfamily.

The protein localises to the cytoplasm. The catalysed reaction is phosphoenolpyruvate + UDP-N-acetyl-alpha-D-glucosamine = UDP-N-acetyl-3-O-(1-carboxyvinyl)-alpha-D-glucosamine + phosphate. The protein operates within cell wall biogenesis; peptidoglycan biosynthesis. Functionally, cell wall formation. Adds enolpyruvyl to UDP-N-acetylglucosamine. In Desulfatibacillum aliphaticivorans, this protein is UDP-N-acetylglucosamine 1-carboxyvinyltransferase.